The following is a 348-amino-acid chain: uncharacterized protein (348 aa).

Functionally, may be involved in apoptosis regulation. This is an uncharacterized protein from Mus musculus (Mouse).